The following is a 267-amino-acid chain: Digeranylgeranylglyceryl phosphate synthase (267 aa).

A run of 7 helical transmembrane segments spans residues 10–30 (ANCVMAGAASLTGMLVSGALL), 33–53 (LHTPVLVFSAVLLITGGGNAI), 80–100 (AALIWSVALFIAGCLIAGLIN), 104–121 (LALALLNSFVLIIYAARL), 139–159 (TFLFGGLAASPSSITAFLSIL), 198–218 (VLASLVLIVAMLLSYLVPLGI), and 247–267 (QRWIKMGMGMALVAFLIGYHI).

Belongs to the UbiA prenyltransferase family. DGGGP synthase subfamily. Requires Mg(2+) as cofactor.

The protein resides in the cell membrane. It carries out the reaction sn-3-O-(geranylgeranyl)glycerol 1-phosphate + (2E,6E,10E)-geranylgeranyl diphosphate = 2,3-bis-O-(geranylgeranyl)-sn-glycerol 1-phosphate + diphosphate. It participates in membrane lipid metabolism; glycerophospholipid metabolism. Prenyltransferase that catalyzes the transfer of the geranylgeranyl moiety of geranylgeranyl diphosphate (GGPP) to the C2 hydroxyl of (S)-3-O-geranylgeranylglyceryl phosphate (GGGP). This reaction is the second ether-bond-formation step in the biosynthesis of archaeal membrane lipids. In Methanothrix thermoacetophila (strain DSM 6194 / JCM 14653 / NBRC 101360 / PT) (Methanosaeta thermophila), this protein is Digeranylgeranylglyceryl phosphate synthase.